Here is a 296-residue protein sequence, read N- to C-terminus: Sulfotransferase 1C2 (296 aa).

49–54 (KSGTTW) contributes to the 3'-phosphoadenylyl sulfate binding site. A substrate-binding site is contributed by 107-109 (RTH). H109 (proton acceptor) is an active-site residue. Residues R131, S139, Y194, and 228 to 233 (TSFEKM) contribute to the 3'-phosphoadenylyl sulfate site. S139 carries the phosphoserine modification. A Phosphoserine modification is found at S254. 256 to 260 (FMRKG) provides a ligand contact to 3'-phosphoadenylyl sulfate.

Belongs to the sulfotransferase 1 family. In terms of tissue distribution, found in gastrointestinal tract tissues, liver and kidney.

It is found in the cytoplasm. The protein localises to the lysosome. Its subcellular location is the mitochondrion. It carries out the reaction a phenol + 3'-phosphoadenylyl sulfate = an aryl sulfate + adenosine 3',5'-bisphosphate + H(+). The enzyme catalyses cholesterol + 3'-phosphoadenylyl sulfate = cholesterol sulfate + adenosine 3',5'-bisphosphate + H(+). In terms of biological role, sulfotransferase that utilizes 3'-phospho-5'-adenylyl sulfate (PAPS) to catalyze the sulfate conjugation of phenolic compounds. Does not transfer sulfate to steroids, dopamine, acetaminophen, or alpha-naphthol. Except in mitochondria, where it can add sulfate to cholesterol producing cholesterol sulfate, which alters mitochondrial membrane organization, and impacts protein complex mobility increasing state-III respiration, thereby modulating mitochondrial respiration. Catalyzes the sulfation of the carcinogenic N-hydroxy-2-acetylaminofluorene leading to highly reactive intermediates capable of forming DNA adducts, potentially resulting in mutagenesis. In Oryctolagus cuniculus (Rabbit), this protein is Sulfotransferase 1C2 (SULT1C2).